Reading from the N-terminus, the 232-residue chain is 6-phosphogluconolactonase (232 aa).

Belongs to the glucosamine/galactosamine-6-phosphate isomerase family. 6-phosphogluconolactonase subfamily.

It catalyses the reaction 6-phospho-D-glucono-1,5-lactone + H2O = 6-phospho-D-gluconate + H(+). Its pathway is carbohydrate degradation; pentose phosphate pathway; D-ribulose 5-phosphate from D-glucose 6-phosphate (oxidative stage): step 2/3. Hydrolysis of 6-phosphogluconolactone to 6-phosphogluconate. This chain is 6-phosphogluconolactonase (pgl), found in Caulobacter vibrioides (strain ATCC 19089 / CIP 103742 / CB 15) (Caulobacter crescentus).